Consider the following 187-residue polypeptide: UPF0301 protein YqgE (187 aa).

It belongs to the UPF0301 (AlgH) family.

The protein is UPF0301 protein YqgE of Escherichia fergusonii (strain ATCC 35469 / DSM 13698 / CCUG 18766 / IAM 14443 / JCM 21226 / LMG 7866 / NBRC 102419 / NCTC 12128 / CDC 0568-73).